An 82-amino-acid chain; its full sequence is UPF0154 protein SPD_1662 (82 aa).

Residues 5–25 (LAIVLIVLAFLGGALGGMYLV) form a helical membrane-spanning segment.

The protein belongs to the UPF0154 family.

It is found in the cell membrane. The protein is UPF0154 protein SPD_1662 of Streptococcus pneumoniae serotype 2 (strain D39 / NCTC 7466).